Here is a 393-residue protein sequence, read N- to C-terminus: NAD(P)H-quinone oxidoreductase subunit H, chloroplastic (393 aa).

The protein belongs to the complex I 49 kDa subunit family. In terms of assembly, NDH is composed of at least 16 different subunits, 5 of which are encoded in the nucleus.

The protein resides in the plastid. The protein localises to the chloroplast thylakoid membrane. The catalysed reaction is a plastoquinone + NADH + (n+1) H(+)(in) = a plastoquinol + NAD(+) + n H(+)(out). It carries out the reaction a plastoquinone + NADPH + (n+1) H(+)(in) = a plastoquinol + NADP(+) + n H(+)(out). In terms of biological role, NDH shuttles electrons from NAD(P)H:plastoquinone, via FMN and iron-sulfur (Fe-S) centers, to quinones in the photosynthetic chain and possibly in a chloroplast respiratory chain. The immediate electron acceptor for the enzyme in this species is believed to be plastoquinone. Couples the redox reaction to proton translocation, and thus conserves the redox energy in a proton gradient. This Nasturtium officinale (Watercress) protein is NAD(P)H-quinone oxidoreductase subunit H, chloroplastic.